The primary structure comprises 262 residues: Fibroin light chain (262 aa).

Residues 1 to 16 (MKPIFLVLLVATSAYA) form the signal peptide. S19 is modified (N-acetylserine; in short form). C101 and C160 are disulfide-bonded.

Silk fibroin elementary unit consists in a disulfide-linked heavy and light chain and a p25 glycoprotein in molar ratios of 6:6:1. This results in a complex of approximately 2.3 MDa. Post-translationally, the interchain disulfide bridge is essential for the intracellular transport and secretion of fibroin. Partially N-terminally processed to yield a short form which lacks the first two residues of the long form. Produced exclusively in the posterior (PSG) section of silk glands, which are essentially modified salivary glands.

The protein localises to the secreted. Functionally, it is likely that the major role of L-chain is to prevent the retention of H-chain in ER by forming the disulfide linkage. This chain is Fibroin light chain (FIBL), found in Bombyx mori (Silk moth).